Consider the following 322-residue polypeptide: 3-alpha-hydroxysteroid dehydrogenase (322 aa).

Methionine 1 is subject to Blocked amino end (Met). NADP(+)-binding positions include 20 to 24 and aspartate 50; that span reads GFGTT. Tyrosine 55 functions as the Proton donor in the catalytic mechanism. Residue histidine 117 participates in substrate binding. Residues 166 to 167, glutamine 190, and 216 to 221 contribute to the NADP(+) site; these read SN and YCTLGS. A substrate-binding site is contributed by tryptophan 227. 270 to 280 is a binding site for NADP(+); the sequence is RSFNAKRIKEL.

It belongs to the aldo/keto reductase family. Monomer. As to expression, in brain, highest levels found in olfactory bulb. Moderate levels present in cerebellum, cerebral cortex, hypothalamus and pituitary. Low levels present in amygdala, brain stem, caudate putamen, cingulate cortex, hippocampus, midbrain, and thalamus.

The protein localises to the cytoplasm. The catalysed reaction is a 3alpha-hydroxysteroid + NADP(+) = a 3-oxosteroid + NADPH + H(+). The enzyme catalyses a 3alpha-hydroxysteroid + NAD(+) = a 3-oxosteroid + NADH + H(+). Its activity is regulated as follows. Potently inhibited by the nonsteroidal anti-inflammatory drugs (NSAID). In terms of biological role, besides being a 3-alpha-hydroxysteroid dehydrogenase, the enzyme can accomplish diverse functions: as quinone reductase, as an aromatic alcohol dehydrogenase, as dihydrodiol dehydrogenase, and as 9-, 11-, and 15-hydroxyprostaglandin dehydrogenase. The polypeptide is 3-alpha-hydroxysteroid dehydrogenase (Akr1c9) (Rattus norvegicus (Rat)).